The sequence spans 77 residues: Sec-independent protein translocase protein TatA 2 (77 aa).

The helical transmembrane segment at 2–22 (FPGGISMTELIIILAVILLLF) threads the bilayer. Residues 52–77 (KEVKAEDVKTEERKEEKKEEKEKVEA) form a disordered region.

Belongs to the TatA/E family. Forms a complex with TatC.

It localises to the cell inner membrane. Part of the twin-arginine translocation (Tat) system that transports large folded proteins containing a characteristic twin-arginine motif in their signal peptide across membranes. TatA could form the protein-conducting channel of the Tat system. This Aquifex aeolicus (strain VF5) protein is Sec-independent protein translocase protein TatA 2.